A 402-amino-acid chain; its full sequence is Probable glutamate 5-kinase (402 aa).

Ser58, Asp145, and Asn157 together coordinate substrate. ATP-binding positions include 177-178 (TD) and 218-224 (TGGMKTK). In terms of domain architecture, PUA spans 295 to 373 (HGSLEIDRGA…KEIASILGYN (79 aa)).

Belongs to the glutamate 5-kinase family.

It localises to the cytoplasm. The catalysed reaction is L-glutamate + ATP = L-glutamyl 5-phosphate + ADP. The protein operates within amino-acid biosynthesis; L-proline biosynthesis; L-glutamate 5-semialdehyde from L-glutamate: step 1/2. Its function is as follows. Catalyzes the transfer of a phosphate group to glutamate to form glutamate 5-phosphate which rapidly cyclizes to 5-oxoproline. The chain is Probable glutamate 5-kinase from Schizosaccharomyces pombe (strain 972 / ATCC 24843) (Fission yeast).